Here is a 334-residue protein sequence, read N- to C-terminus: Pantothenate synthetase (334 aa).

34-41 (MGALHEGH) contacts ATP. Residue His-41 is the Proton donor of the active site. (R)-pantoate is bound at residue Gln-71. Gln-71 lines the beta-alanine pocket. 158–161 (GQKD) is an ATP binding site. Gln-164 serves as a coordination point for (R)-pantoate. ATP is bound by residues Val-187 and 195–198 (LSSR). Residues 288–334 (PLMLGTRGPAGEASPPNRERSEPGSAEQNKSPGEARTTPSGTSEASE) form a disordered region. The span at 313–334 (AEQNKSPGEARTTPSGTSEASE) shows a compositional bias: polar residues.

The protein belongs to the pantothenate synthetase family. Homodimer.

Its subcellular location is the cytoplasm. The catalysed reaction is (R)-pantoate + beta-alanine + ATP = (R)-pantothenate + AMP + diphosphate + H(+). Its pathway is cofactor biosynthesis; (R)-pantothenate biosynthesis; (R)-pantothenate from (R)-pantoate and beta-alanine: step 1/1. Catalyzes the condensation of pantoate with beta-alanine in an ATP-dependent reaction via a pantoyl-adenylate intermediate. In Nocardioides sp. (strain ATCC BAA-499 / JS614), this protein is Pantothenate synthetase.